The chain runs to 319 residues: Acetyl esterase (319 aa).

The Involved in the stabilization of the negatively charged intermediate by the formation of the oxyanion hole motif lies at 91–93 (HGG). Catalysis depends on residues S165, D262, and H292.

The protein belongs to the 'GDXG' lipolytic enzyme family. In terms of assembly, homodimer. Interacts with MalT and MelA.

It localises to the cytoplasm. In terms of biological role, displays esterase activity towards short chain fatty esters (acyl chain length of up to 8 carbons). Able to hydrolyze triacetylglycerol (triacetin) and tributyrylglycerol (tributyrin), but not trioleylglycerol (triolein) or cholesterol oleate. Negatively regulates MalT activity by antagonizing maltotriose binding. Inhibits MelA galactosidase activity. The polypeptide is Acetyl esterase (Escherichia coli O9:H4 (strain HS)).